We begin with the raw amino-acid sequence, 239 residues long: Homeobox-leucine zipper protein HOX12 (239 aa).

The segment at proline 22–leucine 65 is disordered. A DNA-binding region (homeobox) is located at residues glutamate 58–leucine 117. Positions glutamine 107 to threonine 168 form a coiled coil.

It belongs to the HD-ZIP homeobox family. Class I subfamily. As to expression, expressed in seedlings, roots, stems, leaf sheaths and panicles.

The protein resides in the nucleus. Functionally, probable transcription factor. This chain is Homeobox-leucine zipper protein HOX12 (HOX12), found in Oryza sativa subsp. indica (Rice).